The sequence spans 396 residues: Argininosuccinate synthase (396 aa).

An ATP-binding site is contributed by 9–17 (AYSGGLDTS). L-citrulline is bound at residue tyrosine 85. Glycine 115 contacts ATP. Residues threonine 117, asparagine 121, and aspartate 122 each contribute to the L-aspartate site. Asparagine 121 contacts L-citrulline. 4 residues coordinate L-citrulline: arginine 125, serine 173, glutamate 258, and tyrosine 270.

The protein belongs to the argininosuccinate synthase family. Type 1 subfamily. As to quaternary structure, homotetramer.

It is found in the cytoplasm. It catalyses the reaction L-citrulline + L-aspartate + ATP = 2-(N(omega)-L-arginino)succinate + AMP + diphosphate + H(+). Its pathway is amino-acid biosynthesis; L-arginine biosynthesis; L-arginine from L-ornithine and carbamoyl phosphate: step 2/3. The polypeptide is Argininosuccinate synthase (Streptococcus agalactiae serotype V (strain ATCC BAA-611 / 2603 V/R)).